We begin with the raw amino-acid sequence, 571 residues long: Hsp70-Hsp90 organizing protein 2 (571 aa).

TPR repeat units lie at residues 2-35 (ADEA…TPTN), 37-69 (VLFS…KPDW), and 70-103 (GKGY…DPSN). The segment at 117–137 (ASRSRASAPNPFGDAFQGPEM) is disordered. An STI1 1 domain is found at 134–173 (GPEMWSKLTADPSTRGLLKQPDFVNMMKEIQRNPSNLNLY). Position 168 is a phosphoserine (Ser-168). The span at 198–207 (DDMEIGEEEM) shows a compositional bias: acidic residues. The interval 198–245 (DDMEIGEEEMAVPSRKEPEVEKKRKPEPEPEPEPEFGEEKQKKLKAQK) is disordered. Composition is skewed to basic and acidic residues over residues 211–225 (SRKE…KPEP) and 234–245 (GEEKQKKLKAQK). Residues 240 to 257 (KLKAQKEKELGNAAYKKK) carry the Bipartite nuclear localization signal motif. TPR repeat units lie at residues 243–276 (AQKE…DDED), 278–310 (SYIT…GREL), 322–355 (TRKG…HRNP), 382–415 (GDEE…NPKD), 417–449 (RAYS…DPTF), and 450–483 (LKGY…DPNN). One can recognise an STI1 2 domain in the interval 520–559 (DPEIQNILTDPVMRQVLSDLQENPAAAQKHMQNPMIMNKI).

In terms of assembly, co-chaperone that forms a complex with HSP70 and HSP90 and preproteins (e.g. chloroplast preproteins). Post-translationally, phosphorylated. Acetylated.

Its subcellular location is the cytoplasm. The protein localises to the nucleus. Functionally, mediates the association of the molecular chaperones HSP70 and HSP90. Mediates nuclear encoded chloroplast preproteins binding to HSP90 prior to chloroplastic sorting. This chain is Hsp70-Hsp90 organizing protein 2 (HOP2), found in Arabidopsis thaliana (Mouse-ear cress).